Reading from the N-terminus, the 930-residue chain is Isoleucine--tRNA ligase (930 aa).

The short motif at 57 to 67 is the 'HIGH' region element; sequence PYANGHLHIGH. An L-isoleucyl-5'-AMP-binding site is contributed by E573. The 'KMSKS' region signature appears at 614–618; that stretch reads KMSKS. Position 617 (K617) interacts with ATP. The Zn(2+) site is built by C902, C905, C918, and C921.

This sequence belongs to the class-I aminoacyl-tRNA synthetase family. IleS type 1 subfamily. As to quaternary structure, monomer. Zn(2+) is required as a cofactor.

It localises to the cytoplasm. It carries out the reaction tRNA(Ile) + L-isoleucine + ATP = L-isoleucyl-tRNA(Ile) + AMP + diphosphate. Its function is as follows. Catalyzes the attachment of isoleucine to tRNA(Ile). As IleRS can inadvertently accommodate and process structurally similar amino acids such as valine, to avoid such errors it has two additional distinct tRNA(Ile)-dependent editing activities. One activity is designated as 'pretransfer' editing and involves the hydrolysis of activated Val-AMP. The other activity is designated 'posttransfer' editing and involves deacylation of mischarged Val-tRNA(Ile). The protein is Isoleucine--tRNA ligase of Helicobacter hepaticus (strain ATCC 51449 / 3B1).